We begin with the raw amino-acid sequence, 273 residues long: Large ribosomal subunit protein uL2 (273 aa).

Disordered regions lie at residues 28-53 and 221-273; these read KPFA…TTRH and RGTA…RRSK. Residues 39 to 48 show a composition bias toward low complexity; it reads KSGGRNNNGR. An N6-acetyllysine modification is found at Lys242.

The protein belongs to the universal ribosomal protein uL2 family. Part of the 50S ribosomal subunit. Forms a bridge to the 30S subunit in the 70S ribosome.

In terms of biological role, one of the primary rRNA binding proteins. Required for association of the 30S and 50S subunits to form the 70S ribosome, for tRNA binding and peptide bond formation. It has been suggested to have peptidyltransferase activity; this is somewhat controversial. Makes several contacts with the 16S rRNA in the 70S ribosome. The protein is Large ribosomal subunit protein uL2 of Escherichia coli (strain SE11).